A 308-amino-acid chain; its full sequence is Folate transporter 1, chloroplastic (308 aa).

3 Solcar repeats span residues 4-94, 104-192, and 213-299; these read SWQW…AKQR, LSPA…LRKI, and ADYA…VLKL. 6 helical membrane passes run 10–30, 74–91, 110–130, 164–184, 216–236, and 274–293; these read ATAGAVAGFATVAAMHSLDVV, VIGSTVSWGLYFFFYGRA, LASAAEAGALVCLCTNPIWLV, ALYKGIVPGLVLVSHGAIQFT, AALGGSSKVAAVLLTYPFQVI, and GLTANLLKNVPASSITFIVY.

It belongs to the mitochondrial carrier (TC 2.A.29) family. As to expression, ubiquitous.

It localises to the plastid. Its subcellular location is the chloroplast membrane. Functionally, mediates folate import into chloroplast. The protein is Folate transporter 1, chloroplastic (FOLT1) of Arabidopsis thaliana (Mouse-ear cress).